The chain runs to 455 residues: Serine--tRNA ligase (455 aa).

252 to 254 (TAE) is an L-serine binding site. Residues 283 to 285 (RKE) and Val-299 each bind ATP. Residue Glu-306 coordinates L-serine. Position 370 to 373 (370 to 373 (EVVS)) interacts with ATP. Thr-406 is an L-serine binding site.

It belongs to the class-II aminoacyl-tRNA synthetase family. Type-1 seryl-tRNA synthetase subfamily. Homodimer. The tRNA molecule binds across the dimer.

The protein resides in the cytoplasm. It carries out the reaction tRNA(Ser) + L-serine + ATP = L-seryl-tRNA(Ser) + AMP + diphosphate + H(+). The enzyme catalyses tRNA(Sec) + L-serine + ATP = L-seryl-tRNA(Sec) + AMP + diphosphate + H(+). Its pathway is aminoacyl-tRNA biosynthesis; selenocysteinyl-tRNA(Sec) biosynthesis; L-seryl-tRNA(Sec) from L-serine and tRNA(Sec): step 1/1. Catalyzes the attachment of serine to tRNA(Ser). Is also able to aminoacylate tRNA(Sec) with serine, to form the misacylated tRNA L-seryl-tRNA(Sec), which will be further converted into selenocysteinyl-tRNA(Sec). This Pyrococcus abyssi (strain GE5 / Orsay) protein is Serine--tRNA ligase.